Here is a 231-residue protein sequence, read N- to C-terminus: Septum site-determining protein MinC (231 aa).

The protein belongs to the MinC family. As to quaternary structure, interacts with MinD and FtsZ.

Cell division inhibitor that blocks the formation of polar Z ring septums. Rapidly oscillates between the poles of the cell to destabilize FtsZ filaments that have formed before they mature into polar Z rings. Prevents FtsZ polymerization. This is Septum site-determining protein MinC from Shigella flexneri.